A 783-amino-acid chain; its full sequence is Protein SEY1 (783 aa).

Over 1-677 the chain is Cytoplasmic; that stretch reads MTSQAIQLID…KRSIVTSSTH (677 aa). Residues 33–265 form the GB1/RHD3-type G domain; it reads GFNYHVISVF…YLLKPNYHHK (233 aa). Residue 43–50 participates in GTP binding; that stretch reads GSQSSGKS. A coiled-coil region spans residues 449–472; the sequence is HEKKLQLRESELNALLSKIKKQLT. The helical transmembrane segment at 678–698 threads the bilayer; it reads IPIWIYAVIVVLGWNEFMIVI. Residues 699–701 are Lumenal-facing; sequence RNP. Residues 702 to 722 traverse the membrane as a helical segment; it reads LFVTLALLSIVSFYFIQKFGL. Over 723 to 783 the chain is Cytoplasmic; that stretch reads WGPVMNVVNT…SSSSGNEDSD (61 aa).

It belongs to the TRAFAC class dynamin-like GTPase superfamily. GB1/RHD3 GTPase family. RHD3 subfamily.

It is found in the endoplasmic reticulum membrane. In terms of biological role, cooperates with the reticulon proteins and tubule-shaping DP1 family proteins to generate and maintain the structure of the tubular endoplasmic reticulum network. Has GTPase activity, which is required for its function in ER organization. This chain is Protein SEY1, found in Candida glabrata (strain ATCC 2001 / BCRC 20586 / JCM 3761 / NBRC 0622 / NRRL Y-65 / CBS 138) (Yeast).